A 144-amino-acid polypeptide reads, in one-letter code: MRLNTLSPAEGSKHASKRLGRGIGSGLGKTGGRGHKGQKSRSGGGVRRGFEGGQMPLYRRLPKFGFTSRKAMVTAEIRLSEIALIEGDVIDLNVLKAANVIGPQIEFAKVMLSGEINRAVTLRGLRVSKGARAAIEAAGGKIEE.

A disordered region spans residues 1 to 53 (MRLNTLSPAEGSKHASKRLGRGIGSGLGKTGGRGHKGQKSRSGGGVRRGFEGG). Residues 21-31 (RGIGSGLGKTG) show a composition bias toward gly residues.

It belongs to the universal ribosomal protein uL15 family. As to quaternary structure, part of the 50S ribosomal subunit.

Functionally, binds to the 23S rRNA. The polypeptide is Large ribosomal subunit protein uL15 (Edwardsiella ictaluri (strain 93-146)).